Consider the following 363-residue polypeptide: Protein-glutamate methylesterase/protein-glutamine glutaminase 1 (363 aa).

The region spanning 7–124 (KVLIVDDSAL…SRGMQEYARE (118 aa)) is the Response regulatory domain. Aspartate 58 is subject to 4-aspartylphosphate. A CheB-type methylesterase domain is found at 164 to 356 (FSSTEKIIVI…RRLFGWLESQ (193 aa)). Residues serine 176, histidine 202, and aspartate 298 contribute to the active site.

It belongs to the CheB family. In terms of processing, phosphorylated by CheA. Phosphorylation of the N-terminal regulatory domain activates the methylesterase activity.

It is found in the cytoplasm. It catalyses the reaction [protein]-L-glutamate 5-O-methyl ester + H2O = L-glutamyl-[protein] + methanol + H(+). The enzyme catalyses L-glutaminyl-[protein] + H2O = L-glutamyl-[protein] + NH4(+). Functionally, involved in chemotaxis. Part of a chemotaxis signal transduction system that modulates chemotaxis in response to various stimuli. Catalyzes the demethylation of specific methylglutamate residues introduced into the chemoreceptors (methyl-accepting chemotaxis proteins or MCP) by CheR. Also mediates the irreversible deamidation of specific glutamine residues to glutamic acid. This chain is Protein-glutamate methylesterase/protein-glutamine glutaminase 1, found in Geobacter metallireducens (strain ATCC 53774 / DSM 7210 / GS-15).